The sequence spans 149 residues: Transcription factor MafF (149 aa).

The tract at residues 51 to 76 (RLKQRRRTLKNRGYAASCRVKRVCQK) is basic motif. Residues 51–114 (RLKQRRRTLK…DTLRGKYEAL (64 aa)) enclose the bZIP domain. Residues 79–93 (LQKQKMELEWEVDKL) are leucine-zipper.

The protein belongs to the bZIP family. Maf subfamily. In terms of assembly, monomer and homo- or heterodimer. As to expression, highly expressed in the ovary, lower expression in the brain, heart and mesenterium.

It localises to the nucleus. Since it lacks a putative transactivation domain, it may behave as a transcriptional repressor when it dimerizes among itself. May also serve as a transcriptional activator by dimerizing with other (usually larger) basic-zipper proteins and recruiting them to specific DNA-binding sites. May be involved in the cellular stress response. The chain is Transcription factor MafF (MAFF) from Gallus gallus (Chicken).